The primary structure comprises 305 residues: HTH-type transcriptional regulator KdgR (305 aa).

The HTH iclR-type domain maps to 55 to 116 (VSSVLKVFGI…GESEKYSLTL (62 aa)). The segment at residues 76–95 (ITELSQRVMMSKSTVYRFLQ) is a DNA-binding region (H-T-H motif). The IclR-ED domain occupies 131–300 (LIRSADIQMR…ARNISDQMGY (170 aa)).

Homodimer.

It is found in the cytoplasm. Functionally, transcriptional repressor that negatively regulates the expression of genes involved in pectinolysis and in pectinase secretion. Controls genes involved in pectin catabolism, including the pectinase genes (pelA, pelB, pelC, pelE), genes involved in pectin catabolism (kdgT, ogl, kduI-kdgF) and the outT gene involved in pectinase secretion. Acts by binding directly to KdgR binding sites (KdgR-box) in the gene operator/promoter region. The sequence is that of HTH-type transcriptional regulator KdgR from Dickeya chrysanthemi (Pectobacterium chrysanthemi).